A 313-amino-acid polypeptide reads, in one-letter code: Cytochrome c biogenesis protein CcsA (313 aa).

8 helical membrane-spanning segments follow: residues 9–29 (ILTH…LITL), 44–64 (GIIV…ISSG), 71–91 (LYES…IPYF), 101–121 (IIGP…LTEI), 143–163 (MILG…LLVI), 217–237 (VISL…VWAN), 244–264 (WNWD…AIYL), and 278–298 (AIVA…VNLL).

This sequence belongs to the CcmF/CycK/Ccl1/NrfE/CcsA family. May interact with Ccs1.

The protein localises to the plastid. It is found in the chloroplast thylakoid membrane. Required during biogenesis of c-type cytochromes (cytochrome c6 and cytochrome f) at the step of heme attachment. This is Cytochrome c biogenesis protein CcsA from Nicotiana tomentosiformis (Tobacco).